A 162-amino-acid polypeptide reads, in one-letter code: Large ribosomal subunit protein uL10 (162 aa).

This sequence belongs to the universal ribosomal protein uL10 family. Part of the ribosomal stalk of the 50S ribosomal subunit. The N-terminus interacts with L11 and the large rRNA to form the base of the stalk. The C-terminus forms an elongated spine to which L12 dimers bind in a sequential fashion forming a multimeric L10(L12)X complex.

Forms part of the ribosomal stalk, playing a central role in the interaction of the ribosome with GTP-bound translation factors. This chain is Large ribosomal subunit protein uL10, found in Acholeplasma laidlawii (strain PG-8A).